Here is a 244-residue protein sequence, read N- to C-terminus: Probable ABC transporter ATP-binding protein in ycf23-apcF intergenic region (244 aa).

An ABC transporter domain is found at 9-241 (LEINNLTVSY…KLSTLFGEHI (233 aa)). An ATP-binding site is contributed by 41–48 (GPNGAGKS).

This sequence belongs to the ABC transporter superfamily.

It is found in the plastid. Its subcellular location is the cyanelle. This chain is Probable ABC transporter ATP-binding protein in ycf23-apcF intergenic region, found in Cyanophora paradoxa.